Here is a 351-residue protein sequence, read N- to C-terminus: sn-glycerol-3-phosphate import ATP-binding protein UgpC (351 aa).

Residues 4–234 (ITLDNLVKAY…PATTFVAGFI (231 aa)) enclose the ABC transporter domain. 36–43 (GPSGCGKS) contacts ATP.

The protein belongs to the ABC transporter superfamily. sn-glycerol-3-phosphate importer (TC 3.A.1.1.3) family. The complex is composed of two ATP-binding proteins (UgpC), two transmembrane proteins (UgpA and UgpE) and a solute-binding protein (UgpB).

It localises to the cell inner membrane. It catalyses the reaction sn-glycerol 3-phosphate(out) + ATP + H2O = sn-glycerol 3-phosphate(in) + ADP + phosphate + H(+). In terms of biological role, part of the ABC transporter complex UgpBAEC involved in sn-glycerol-3-phosphate (G3P) import. Responsible for energy coupling to the transport system. This Ruegeria pomeroyi (strain ATCC 700808 / DSM 15171 / DSS-3) (Silicibacter pomeroyi) protein is sn-glycerol-3-phosphate import ATP-binding protein UgpC.